The primary structure comprises 470 residues: 3-isopropylmalate dehydratase large subunit (470 aa).

The interval 50–121 (NVARGCQHRH…PCGRPGAGRH (72 aa)) is disordered. [4Fe-4S] cluster-binding residues include Cys-349, Cys-409, and Cys-412.

The protein belongs to the aconitase/IPM isomerase family. LeuC type 1 subfamily. As to quaternary structure, heterodimer of LeuC and LeuD. It depends on [4Fe-4S] cluster as a cofactor.

The catalysed reaction is (2R,3S)-3-isopropylmalate = (2S)-2-isopropylmalate. The protein operates within amino-acid biosynthesis; L-leucine biosynthesis; L-leucine from 3-methyl-2-oxobutanoate: step 2/4. Functionally, catalyzes the isomerization between 2-isopropylmalate and 3-isopropylmalate, via the formation of 2-isopropylmaleate. This is 3-isopropylmalate dehydratase large subunit from Azotobacter vinelandii.